The primary structure comprises 421 residues: ATP-dependent RNA helicase RhlB (421 aa).

A Q motif motif is present at residues glutamine 9–alanine 37. In terms of domain architecture, Helicase ATP-binding spans leucine 40–valine 219. ATP is bound at residue alanine 53 to threonine 60. Positions aspartate 165–aspartate 168 match the DEAD box motif. One can recognise a Helicase C-terminal domain in the interval arginine 245–leucine 390. The tract at residues proline 386–glycine 421 is disordered. The span at glycine 405–proline 414 shows a compositional bias: low complexity.

It belongs to the DEAD box helicase family. RhlB subfamily. In terms of assembly, component of the RNA degradosome, which is a multiprotein complex involved in RNA processing and mRNA degradation.

The protein localises to the cytoplasm. It carries out the reaction ATP + H2O = ADP + phosphate + H(+). In terms of biological role, DEAD-box RNA helicase involved in RNA degradation. Has RNA-dependent ATPase activity and unwinds double-stranded RNA. The sequence is that of ATP-dependent RNA helicase RhlB from Enterobacter sp. (strain 638).